The primary structure comprises 600 residues: Methionine--tRNA ligase (600 aa).

Positions 12 to 22 (PYANGPRHIGH) match the 'HIGH' region motif. Positions 144, 147, 157, and 160 each coordinate Zn(2+). The 'KMSKS' region signature appears at 351 to 355 (KFSSS). Serine 354 serves as a coordination point for ATP.

It belongs to the class-I aminoacyl-tRNA synthetase family. MetG type 1 subfamily. In terms of assembly, monomer. It depends on Zn(2+) as a cofactor.

Its subcellular location is the cytoplasm. The enzyme catalyses tRNA(Met) + L-methionine + ATP = L-methionyl-tRNA(Met) + AMP + diphosphate. Functionally, is required not only for elongation of protein synthesis but also for the initiation of all mRNA translation through initiator tRNA(fMet) aminoacylation. This chain is Methionine--tRNA ligase, found in Chloroflexus aggregans (strain MD-66 / DSM 9485).